The following is a 160-amino-acid chain: MSILKKPDLTDPKLRAKLAKGMGHNYYGEPAWPNDLLYVFPVVILGTIACSIGLAILEPSSLGEKSNPFATPLEILPEWYFFPTFNLLRVIPNKLLGVLSMAAVPAGLLTVPFIENVNKFQNPFRRPIATTIFLISTVITIWLGIGATMPINNAITLGLF.

Helical transmembrane passes span 36-56, 95-115, and 131-151; these read LLYV…GLAI, LLGV…PFIE, and TIFL…TMPI.

The protein belongs to the cytochrome b family. PetD subfamily. In terms of assembly, the 4 large subunits of the cytochrome b6-f complex are cytochrome b6, subunit IV (17 kDa polypeptide, petD), cytochrome f and the Rieske protein, while the 4 small subunits are petG, petL, petM and petN. The complex functions as a dimer.

It localises to the plastid. It is found in the chloroplast thylakoid membrane. Component of the cytochrome b6-f complex, which mediates electron transfer between photosystem II (PSII) and photosystem I (PSI), cyclic electron flow around PSI, and state transitions. The sequence is that of Cytochrome b6-f complex subunit 4 from Porphyra purpurea (Red seaweed).